Consider the following 234-residue polypeptide: Sperm-associated microtubule inner protein 5 (234 aa).

In terms of assembly, microtubule inner protein component of sperm flagellar doublet microtubules. In terms of tissue distribution, expressed in testis (at protein level). Strongly expressed in peritubular cells and Leydig cells and weakly expressed in the cytoplasm of spermatocytes.

The protein resides in the cytoplasm. It localises to the cytoskeleton. It is found in the flagellum axoneme. The protein localises to the nucleus. Functionally, microtubule inner protein (MIP) part of the dynein-decorated doublet microtubules (DMTs) in flagellum axoneme. May serve to reinforce and thus stabilize the microtubule structure in the sperm flagella. This Homo sapiens (Human) protein is Sperm-associated microtubule inner protein 5.